The sequence spans 213 residues: Large ribosomal subunit protein uL23 (213 aa).

Residues methionine 1–glutamate 117 are large ribosomal subunit protein uL23. Positions lysine 118–valine 213 are unknown.

The protein belongs to the universal ribosomal protein uL23 family. Part of the 50S ribosomal subunit. Contacts protein L29, and trigger factor when it is bound to the ribosome.

One of the early assembly proteins it binds 23S rRNA. One of the proteins that surrounds the polypeptide exit tunnel on the outside of the ribosome. Forms the main docking site for trigger factor binding to the ribosome. The polypeptide is Large ribosomal subunit protein uL23 (Mycoplasma mobile (strain ATCC 43663 / 163K / NCTC 11711) (Mesomycoplasma mobile)).